The following is a 280-amino-acid chain: Clathrin adapter accessory protein LAA2 (280 aa).

Residues M1–N26 are disordered. The Ear-binding motif motif lies at D19 to A30.

In terms of assembly, interacts with the clathrin-associated adapter complex AP-1. Interacts with LAA1.

Its subcellular location is the cytoplasmic vesicle. It localises to the clathrin-coated vesicle. In terms of biological role, involved in localization of clathrin-associated adapter complex (AP-1) and subsequent AP-1-mediated clathrin-coated vesicle cargo loading. Directly mediates the interaction between LAA1 and AP-1 which is required for AP-1 localization. In complex with LAA1, cooperates with the small GTPase ARF1 and the phosphatidyl-inositol-4-phosphate (PI4P) synthesis to confer temporal specificity to AP-1 recruitment. This chain is Clathrin adapter accessory protein LAA2, found in Saccharomyces cerevisiae (strain ATCC 204508 / S288c) (Baker's yeast).